A 237-amino-acid chain; its full sequence is Octanoyltransferase (237 aa).

A BPL/LPL catalytic domain is found at 27 to 210 (SGGDDILLLL…EFYHIFQPAG (184 aa)). Substrate is bound by residues 72–79 (RGGNVTCH), 139–141 (SLG), and 152–154 (GMA). Cys170 (acyl-thioester intermediate) is an active-site residue.

It belongs to the LipB family.

The protein resides in the cytoplasm. The catalysed reaction is octanoyl-[ACP] + L-lysyl-[protein] = N(6)-octanoyl-L-lysyl-[protein] + holo-[ACP] + H(+). Its pathway is protein modification; protein lipoylation via endogenous pathway; protein N(6)-(lipoyl)lysine from octanoyl-[acyl-carrier-protein]: step 1/2. Catalyzes the transfer of endogenously produced octanoic acid from octanoyl-acyl-carrier-protein onto the lipoyl domains of lipoate-dependent enzymes. Lipoyl-ACP can also act as a substrate although octanoyl-ACP is likely to be the physiological substrate. This chain is Octanoyltransferase, found in Desulfovibrio desulfuricans (strain ATCC 27774 / DSM 6949 / MB).